The following is a 408-amino-acid chain: MTKTKFNPYQFRKQFKWFKNNPQWVNFDNAATSIALDTVSQACKEYYELFSVNPHNKTPDLNNQIIAIIAETRQLVADWFNVTALEIIFTSSATESINLFAHGLKPWIKPGDEIVLKGDEHSANVLPWVALAKQTKARLVWVEKQANQSLEDTFKSLINPKTKVVAITATSNLFGNSIDFAQIADYLKQVNPKAFVAVDAVQTVQHKQIDIAKTQIDFLAFSTHKFYGPTGLGVAYIKKSLQPQLQPLKLGGDIFTQIDPDNTIHFKSTPLKFEAGTPNIMAIYALNKLLRFFKQKFNFAQMMAYGHQLKQQAYELLNSNPQIVLANHDQDVPIFSFKHRQLATIDLATFLNINKIMVRQGSICVGRYRNKDYFVRVSLMHYNTVKELQYLAKLLATDTKTIIKNVIK.

Lys225 bears the N6-(pyridoxal phosphate)lysine mark.

This sequence belongs to the class-V pyridoxal-phosphate-dependent aminotransferase family. Csd subfamily. Pyridoxal 5'-phosphate is required as a cofactor.

It carries out the reaction (sulfur carrier)-H + L-cysteine = (sulfur carrier)-SH + L-alanine. Its function is as follows. Catalyzes the removal of elemental sulfur and selenium atoms from L-cysteine, L-cystine, L-selenocysteine, and L-selenocystine to produce L-alanine. The chain is Probable cysteine desulfurase (csd) from Mycoplasma pneumoniae (strain ATCC 29342 / M129 / Subtype 1) (Mycoplasmoides pneumoniae).